Consider the following 323-residue polypeptide: NADH-ubiquinone oxidoreductase chain 1 (323 aa).

Transmembrane regions (helical) follow at residues 4-24 (LFTV…VAFL), 73-93 (YLFF…WNLM), 106-126 (LLLV…SGWA), 150-170 (LALI…TYIM), 175-195 (FSWF…STLA), 226-246 (LFFI…VVIF), 256-276 (LFPL…FLFL), and 303-323 (IGAL…LPLF).

The protein belongs to the complex I subunit 1 family.

The protein localises to the mitochondrion inner membrane. The enzyme catalyses a ubiquinone + NADH + 5 H(+)(in) = a ubiquinol + NAD(+) + 4 H(+)(out). Core subunit of the mitochondrial membrane respiratory chain NADH dehydrogenase (Complex I) that is believed to belong to the minimal assembly required for catalysis. Complex I functions in the transfer of electrons from NADH to the respiratory chain. The immediate electron acceptor for the enzyme is believed to be ubiquinone. This is NADH-ubiquinone oxidoreductase chain 1 (ND1) from Paracentrotus lividus (Common sea urchin).